The following is a 422-amino-acid chain: 5'-deoxyadenosine deaminase (422 aa).

His-57 and His-59 together coordinate Zn(2+). Residues Glu-86 and His-178 each contribute to the substrate site. Residue His-205 coordinates Zn(2+). Substrate-binding residues include Glu-208 and Asp-294. Asp-294 is a binding site for Zn(2+).

The protein belongs to the metallo-dependent hydrolases superfamily. MTA/SAH deaminase family. Homotetramer. It depends on Zn(2+) as a cofactor.

It catalyses the reaction 5'-deoxyadenosine + H2O + H(+) = 5'-deoxyinosine + NH4(+). The enzyme catalyses S-adenosyl-L-homocysteine + H2O + H(+) = S-inosyl-L-homocysteine + NH4(+). It carries out the reaction S-methyl-5'-thioadenosine + H2O + H(+) = S-methyl-5'-thioinosine + NH4(+). The catalysed reaction is adenosine + H2O + H(+) = inosine + NH4(+). It participates in amino-acid biosynthesis; S-adenosyl-L-methionine biosynthesis. Catalyzes the deamination of three SAM-derived enzymatic products, namely 5'-deoxyadenosine, S-adenosyl-L-homocysteine, and 5'-methylthioadenosine, to produce the inosine analogs. Can also deaminate adenosine. The preferred substrate for this enzyme is 5'-deoxyadenosine, but all these substrates are efficiently deaminated. Likely functions in a S-adenosyl-L-methionine (SAM) recycling pathway from S-adenosyl-L-homocysteine (SAH) produced from SAM-dependent methylation reactions. May also be involved in the recycling of 5'-deoxyadenosine, whereupon the 5'-deoxyribose moiety of 5'-deoxyinosine is further metabolized to deoxyhexoses used for the biosynthesis of aromatic amino acids in methanogens. The sequence is that of 5'-deoxyadenosine deaminase from Methanococcus maripaludis (strain C5 / ATCC BAA-1333).